A 67-amino-acid chain; its full sequence is MGNIKQGFIKRTARELFDRYPNEFTRDFEHNKKKVEELTNITSKTMRNRIAGYVTRLVRLKEEGKIL.

It belongs to the eukaryotic ribosomal protein eS17 family.

In Thermococcus sibiricus (strain DSM 12597 / MM 739), this protein is Small ribosomal subunit protein eS17.